The sequence spans 154 residues: MVKAVAVLRGDSKVSGTVTFEQADENSNTTVSWNITGNDPNAERGFHIHQFGDNTNGCTSAGPHFNPFGKTHGAPEDEVRHVGDLGNFKTDAEGNSKGSKTDKLIKLIGAESVLGRTLVVHAGTDDLGRGDSEESKKTGNAGARPACGVIGIAA.

Cu cation is bound by residues histidine 47, histidine 49, and histidine 64. A disulfide bond links cysteine 58 and cysteine 147. Positions 64, 72, 81, and 84 each coordinate Zn(2+). Cu cation is bound at residue histidine 121. Positions 124–137 are enriched in basic and acidic residues; that stretch reads TDDLGRGDSEESKK. Residues 124-144 form a disordered region; it reads TDDLGRGDSEESKKTGNAGAR. Residue arginine 144 coordinates substrate.

It belongs to the Cu-Zn superoxide dismutase family. As to quaternary structure, homodimer. The cofactor is Cu cation. Zn(2+) is required as a cofactor.

It localises to the cytoplasm. It carries out the reaction 2 superoxide + 2 H(+) = H2O2 + O2. Its function is as follows. Destroys radicals which are normally produced within the cells and which are toxic to biological systems. The sequence is that of Superoxide dismutase [Cu-Zn] (sodA) from Emericella nidulans (strain FGSC A4 / ATCC 38163 / CBS 112.46 / NRRL 194 / M139) (Aspergillus nidulans).